A 312-amino-acid chain; its full sequence is Taste receptor type 2 member 135 (312 aa).

The Extracellular segment spans residues 1-19 (MSTGHTVLGCQTTDKTVVT). A helical transmembrane segment spans residues 20–40 (LFIILVLLCLVAVVGNGFIII). At 41–66 (ALGMKWLLRRTLSAHNKLLISLAASR) the chain is on the cytoplasmic side. Residues 67–87 (FCLQCVVIGKNIYVFLNPTSF) traverse the membrane as a helical segment. Residues 88-97 (PYNPVIQLLN) lie on the Extracellular side of the membrane. Residues 98-118 (LMWDFLTAATIWLCSLLGFFY) form a helical membrane-spanning segment. The Cytoplasmic segment spans residues 119–140 (CVKIATLTHPVFVWLKYRLPGW). The helical transmembrane segment at 141–161 (VPWMLLSAVGMSSLTSILCFI) threads the bilayer. The Extracellular portion of the chain corresponds to 162–198 (GNYMIYQNHAKSGHQPWNVTGNSLRHSLEKFYFFSIK). N-linked (GlcNAc...) asparagine glycosylation occurs at Asn-179. Residues 199-219 (IIMWTIPTVVFSIFMSLLLVS) traverse the membrane as a helical segment. Topologically, residues 220-244 (LVRHMKKTFLALSELRDVWAQAHFK) are cytoplasmic. The helical transmembrane segment at 245–265 (ALLPLLSFIVLFISCFLTLVL) threads the bilayer. Topologically, residues 266 to 277 (SSASNTPYQEFR) are extracellular. Residues 278–298 (YWMWQVVIHLCTVIHPIVILF) form a helical membrane-spanning segment. The Cytoplasmic portion of the chain corresponds to 299 to 312 (SNPVLRVVIKRGCC).

This sequence belongs to the G-protein coupled receptor T2R family.

Its subcellular location is the membrane. In terms of biological role, putative taste receptor which may play a role in the perception of bitterness. The polypeptide is Taste receptor type 2 member 135 (Tas2r135) (Mus musculus (Mouse)).